The chain runs to 431 residues: Serine hydroxymethyltransferase 1 (431 aa).

(6S)-5,6,7,8-tetrahydrofolate-binding positions include Leu-127 and 131-133; that span reads GHL. N6-(pyridoxal phosphate)lysine is present on Lys-236. (6S)-5,6,7,8-tetrahydrofolate is bound at residue Glu-252.

It belongs to the SHMT family. Homodimer. It depends on pyridoxal 5'-phosphate as a cofactor.

The protein localises to the cytoplasm. The enzyme catalyses (6R)-5,10-methylene-5,6,7,8-tetrahydrofolate + glycine + H2O = (6S)-5,6,7,8-tetrahydrofolate + L-serine. It participates in one-carbon metabolism; tetrahydrofolate interconversion. It functions in the pathway amino-acid biosynthesis; glycine biosynthesis; glycine from L-serine: step 1/1. Its function is as follows. Catalyzes the reversible interconversion of serine and glycine with tetrahydrofolate (THF) serving as the one-carbon carrier. This reaction serves as the major source of one-carbon groups required for the biosynthesis of purines, thymidylate, methionine, and other important biomolecules. Also exhibits THF-independent aldolase activity toward beta-hydroxyamino acids, producing glycine and aldehydes, via a retro-aldol mechanism. This is Serine hydroxymethyltransferase 1 from Rhizobium meliloti (strain 1021) (Ensifer meliloti).